A 98-amino-acid polypeptide reads, in one-letter code: Secreted LysM effector Mgx1LysM (98 aa).

A signal peptide spans 1–18 (MKVTTIIAALLSVAVVDA). 2 cysteine pairs are disulfide-bonded: C31–C89 and C62–C97. The 49-residue stretch at 37–85 (IPYVVKKGDTLTHIAHDIYKRKVGICDLAYTNHIGKNPNLIYAGQTLLI) folds into the LysM domain. G44, T48, N75, and I77 together coordinate chitin.

This sequence belongs to the secreted LysM effector family. As to quaternary structure, forms homodimers in a chitin-independent manner through interactions at the N-termini of Mgx1LysM monomers. Homodimers are further polymerized in a chitin-dependent manner.

Its subcellular location is the secreted. It is found in the cell wall. Its function is as follows. Secreted effector that enables the plant pathogenic fungus to manipulate host defenses for successful infection. Binds chitin and suppresses the chitin-induced reactive oxygen species (ROS) burst. Chitin-induced polymerization of homodimers forms a contiguous Mg1LysM highly oligomeric super-complexe that is anchored to the chitin in the fungal cell wall to prevent hydrolysis by host chitinases. This chain is Secreted LysM effector Mgx1LysM, found in Zymoseptoria tritici (strain ST99CH_3D7).